Consider the following 905-residue polypeptide: Methionine--tRNA ligase, cytoplasmic (905 aa).

One can recognise a GST N-terminal domain in the interval 1-75; that stretch reads MKLFVGEGNP…YFYLSSGHDM (75 aa). A GST C-terminal domain is found at 72-199; sequence GHDMCDLSNQ…DKGSSVFKPF (128 aa). Positions 271–281 match the 'HIGH' region motif; that stretch reads PYVNNVPHLGN. The short motif at 591-595 is the 'KMSKS' region element; sequence KFSKS. ATP is bound at residue K594. Disordered regions lie at residues 813-874 and 886-905; these read RFGG…VIDP and LALAEGKSPDPPTQKGKKKK. A compositionally biased stretch (basic and acidic residues) spans 841-874; that stretch reads GPERVKELMQELEKQGNHVRELKGKKAEKSVIDP. One can recognise a WHEP-TRS domain in the interval 844-900; that stretch reads RVKELMQELEKQGNHVRELKGKKAEKSVIDPEVQKLLALKKELALAEGKSPDPPTQK.

This sequence belongs to the class-I aminoacyl-tRNA synthetase family. As to quaternary structure, monomer. Part of a multisubunit complex that groups tRNA ligases for Arg (RARS1), Asp (DARS1), Gln (QARS1), Ile (IARS1), Leu (LARS1), Lys (KARS1), Met (MARS1) the bifunctional ligase for Glu and Pro (EPRS1) and the auxiliary subunits AIMP1/p43, AIMP2/p38 and EEF1E1/p18.

The protein localises to the cytoplasm. It is found in the cytosol. It localises to the nucleus. The protein resides in the nucleolus. It carries out the reaction tRNA(Met) + L-methionine + ATP = L-methionyl-tRNA(Met) + AMP + diphosphate. In terms of biological role, catalyzes the specific attachment of an amino acid to its cognate tRNA in a 2 step reaction: the amino acid (AA) is first activated by ATP to form AA-AMP and then transferred to the acceptor end of the tRNA. Plays a role in the synthesis of ribosomal RNA in the nucleolus. In Xenopus laevis (African clawed frog), this protein is Methionine--tRNA ligase, cytoplasmic (mars1).